Reading from the N-terminus, the 742-residue chain is Phosphatidylinositol 4-phosphate 5-kinase its3 (742 aa).

Disordered regions lie at residues 1–21 (MKID…IPSY) and 82–228 (LFKE…PDIG). Low complexity-rich tracts occupy residues 90 to 105 (PSNP…SNDS) and 129 to 142 (PSSN…LQNL). Composition is skewed to polar residues over residues 158–181 (RSSS…SSSQ) and 193–218 (EKNS…TSGS). Residues 264 to 662 (GHENYVTAYN…RFYKFVESSI (399 aa)) form the PIPK domain. Residues 677 to 742 (QDGQRVNKQQ…RNVTTNTSSS (66 aa)) form a disordered region. A compositionally biased stretch (polar residues) spans 680–719 (QRVNKQQSVNAGNVRTNNKHGSLNNNTAPSSRNAKSTSAH).

Interacts with opy1 (via domain PH 1); the interaction is direct but opy1 does not appear to regulate its3 localization or function. Phosphorylated by casein kinase I. Phosphorylation inactivates the enzyme.

The protein localises to the cell membrane. It carries out the reaction a 1,2-diacyl-sn-glycero-3-phospho-(1D-myo-inositol 4-phosphate) + ATP = a 1,2-diacyl-sn-glycero-3-phospho-(1D-myo-inositol-4,5-bisphosphate) + ADP + H(+). Catalyzes the phosphorylation of phosphatidylinositol 4-phosphate on the fifth hydroxyl of the myo-inositol ring, to form phosphatidylinositol 4,5-bisphosphate. Involved, together with the calcineurin ppb1, in cytokinesis. The sequence is that of Phosphatidylinositol 4-phosphate 5-kinase its3 (its3) from Schizosaccharomyces pombe (strain 972 / ATCC 24843) (Fission yeast).